The primary structure comprises 356 residues: UDP-N-acetylglucosamine--N-acetylmuramyl-(pentapeptide) pyrophosphoryl-undecaprenol N-acetylglucosamine transferase (356 aa).

UDP-N-acetyl-alpha-D-glucosamine contacts are provided by S195 and Q287.

This sequence belongs to the glycosyltransferase 28 family. MurG subfamily.

It localises to the cell membrane. The catalysed reaction is Mur2Ac(oyl-L-Ala-gamma-D-Glu-L-Lys-D-Ala-D-Ala)-di-trans,octa-cis-undecaprenyl diphosphate + UDP-N-acetyl-alpha-D-glucosamine = beta-D-GlcNAc-(1-&gt;4)-Mur2Ac(oyl-L-Ala-gamma-D-Glu-L-Lys-D-Ala-D-Ala)-di-trans,octa-cis-undecaprenyl diphosphate + UDP + H(+). It participates in cell wall biogenesis; peptidoglycan biosynthesis. Cell wall formation. Catalyzes the transfer of a GlcNAc subunit on undecaprenyl-pyrophosphoryl-MurNAc-pentapeptide (lipid intermediate I) to form undecaprenyl-pyrophosphoryl-MurNAc-(pentapeptide)GlcNAc (lipid intermediate II). The polypeptide is UDP-N-acetylglucosamine--N-acetylmuramyl-(pentapeptide) pyrophosphoryl-undecaprenol N-acetylglucosamine transferase (Streptococcus gordonii (strain Challis / ATCC 35105 / BCRC 15272 / CH1 / DL1 / V288)).